The chain runs to 590 residues: Ras-specific guanine nucleotide-releasing factor RalGPS2 (590 aa).

In terms of domain architecture, Ras-GEF spans 49–287 (TPEEYAGQIT…YKLSLKIEPG (239 aa)). A disordered region spans residues 288–319 (ASTPRSAASREDLAGPDIGASPQGGRKSSAAA). Phosphoserine occurs at positions 293, 296, and 308. Positions 331–334 (PQTP) match the PXXP motif. Thr-333 is subject to Phosphothreonine. Residues Ser-336 and Ser-350 each carry the phosphoserine modification. Thr-368 is modified (phosphothreonine). The interval 380–413 (DSVMEPHAPSRGQAESSTLSSGISIGSSDGSELS) is disordered. Phosphoserine is present on Ser-381. A compositionally biased stretch (low complexity) spans 394-410 (ESSTLSSGISIGSSDGS). At Ser-429 the chain carries Phosphoserine. The PH domain maps to 464 to 576 (AVTIQGVLRR…WFKHLSAACQ (113 aa)). A required for stimulation of nucleotide exchange by RALA region spans residues 466-590 (TIQGVLRRKT…QVPTNLMTFE (125 aa)).

As to quaternary structure, interacts with RALA. Interacts with the SH3 domains of GRB2 and PLCG1. Abundant in brain and testis.

The protein localises to the cytoplasm. It is found in the cell membrane. Its function is as follows. Guanine nucleotide exchange factor for the small GTPase RALA. May be involved in cytoskeletal organization. May also be involved in the stimulation of transcription in a Ras-independent fashion. This chain is Ras-specific guanine nucleotide-releasing factor RalGPS2 (Ralgps2), found in Mus musculus (Mouse).